A 181-amino-acid polypeptide reads, in one-letter code: Inner kinetochore subunit MCM16 (181 aa).

Positions 112-171 (KQLIESRAERDELMSKLIELSSKFPKPTIPPDDSDTAGKQVEVEKENETIQELMIALQIH) form a coiled coil.

This sequence belongs to the CENP-H/MCM16 family. As to quaternary structure, component of the heterotrimeric kinetochore subcomplex CTF3, which consists of CTF3, MCM16 and MCM22. The CTF3 subcomplex is part of a larger constitutive centromere-associated network (CCAN) (also known as central kinetochore CTF19 complex in yeast), which is composed of at least AME1, CHL4, CNN1, CTF3, CTF19, IML3, MCM16, MCM21, MCM22, MHF1, MHF2, MIF2, NKP1, NKP2, OKP1 and WIP1. Interacts with CTF19.

It localises to the nucleus. The protein localises to the chromosome. Its subcellular location is the centromere. The protein resides in the kinetochore. Functionally, component of the kinetochore, a multiprotein complex that assembles on centromeric DNA and attaches chromosomes to spindle microtubules, mediating chromosome segregation and sister chromatid segregation during meiosis and mitosis. Component of the inner kinetochore constitutive centromere-associated network (CCAN), which serves as a structural platform for outer kinetochore assembly. The chain is Inner kinetochore subunit MCM16 (MCM16) from Saccharomyces cerevisiae (strain ATCC 204508 / S288c) (Baker's yeast).